The following is a 172-amino-acid chain: Adenine phosphoribosyltransferase (172 aa).

This sequence belongs to the purine/pyrimidine phosphoribosyltransferase family. Homodimer.

Its subcellular location is the cytoplasm. It catalyses the reaction AMP + diphosphate = 5-phospho-alpha-D-ribose 1-diphosphate + adenine. The protein operates within purine metabolism; AMP biosynthesis via salvage pathway; AMP from adenine: step 1/1. Functionally, catalyzes a salvage reaction resulting in the formation of AMP, that is energically less costly than de novo synthesis. This chain is Adenine phosphoribosyltransferase, found in Anaeromyxobacter dehalogenans (strain 2CP-C).